A 207-amino-acid chain; its full sequence is 8-oxoguanine DNA glycosylase/AP lyase (207 aa).

Active-site residues include lysine 128 and aspartate 146.

The protein belongs to the type-2 OGG1 family.

It catalyses the reaction 2'-deoxyribonucleotide-(2'-deoxyribose 5'-phosphate)-2'-deoxyribonucleotide-DNA = a 3'-end 2'-deoxyribonucleotide-(2,3-dehydro-2,3-deoxyribose 5'-phosphate)-DNA + a 5'-end 5'-phospho-2'-deoxyribonucleoside-DNA + H(+). Functionally, catalyzes the excision of an oxidatively damaged form of guanine (7,8-dihydro-8-oxoguanine = 8-oxoG) from DNA. Also cleaves the DNA backbone at apurinic/apyrimidinic sites (AP sites). This Saccharolobus islandicus (strain Y.N.15.51 / Yellowstone #2) (Sulfolobus islandicus) protein is 8-oxoguanine DNA glycosylase/AP lyase.